A 186-amino-acid polypeptide reads, in one-letter code: Peptidyl-tRNA hydrolase (186 aa).

Residue Tyr14 coordinates tRNA. The active-site Proton acceptor is the His19. The tRNA site is built by Phe64, Asn66, and Asn112.

The protein belongs to the PTH family. Monomer.

It localises to the cytoplasm. The catalysed reaction is an N-acyl-L-alpha-aminoacyl-tRNA + H2O = an N-acyl-L-amino acid + a tRNA + H(+). Hydrolyzes ribosome-free peptidyl-tRNAs (with 1 or more amino acids incorporated), which drop off the ribosome during protein synthesis, or as a result of ribosome stalling. In terms of biological role, catalyzes the release of premature peptidyl moieties from peptidyl-tRNA molecules trapped in stalled 50S ribosomal subunits, and thus maintains levels of free tRNAs and 50S ribosomes. This chain is Peptidyl-tRNA hydrolase, found in Anaplasma marginale (strain St. Maries).